The primary structure comprises 317 residues: MIMRFGYVSHAMALWDCSPAKTITFTSFQKLSKQEREDKLYDVTKQNLEHTLRILHYNIAHEIPLYRLSSSIVPLATHPEVEFDYIGAFTPLWRKIGALIKEHNLRISFHPNQFTLFTSDKPHITTNAITDMTYHYKVLDAIGIADSSYINIHVGGAYGNKEKAIERFHENIKKLPAHIKKQMTLENDDKTYTTAETLSICQKEKIPFVFDYHHHMANLCEEPLEELLPAIFETWSHTNIVPKVHISSPKSKKEFRAHAEYIDLEFIKPFLHVAKKINHNFDIMIESKQKDLAMLQFIQELSSIRGIKRISSSTLQW.

The protein belongs to the uve1/UvsE family.

Its function is as follows. Component in a DNA repair pathway. Removal of UV LIGHT damaged nucleotides. Recognizes pyrimidine dimers and cleave a phosphodiester bond immediately 5' to the lesion. The polypeptide is UV DNA damage endonuclease (Bacillus thuringiensis subsp. konkukian (strain 97-27)).